A 41-amino-acid chain; its full sequence is Large ribosomal subunit protein bL36A (41 aa).

It belongs to the bacterial ribosomal protein bL36 family.

The polypeptide is Large ribosomal subunit protein bL36A (Aeromonas salmonicida (strain A449)).